The sequence spans 519 residues: Transketolase, chloroplastic (519 aa).

Asp-11 provides a ligand contact to Mg(2+). Gly-12 and Asn-41 together coordinate thiamine diphosphate. Mg(2+) is bound by residues Asn-41 and Ile-43. His-118 serves as a coordination point for thiamine diphosphate. Positions 118, 212, and 239 each coordinate substrate. Thiamine diphosphate-binding residues include Glu-266 and Phe-293. The active-site Proton donor is the Glu-266. Residues His-317, Asp-325, and Arg-376 each coordinate substrate.

Belongs to the transketolase family. In terms of assembly, homodimer. Requires Mg(2+) as cofactor. Ca(2+) is required as a cofactor. It depends on Mn(2+) as a cofactor. The cofactor is Co(2+). Thiamine diphosphate serves as cofactor. Constitutively expressed in leaves and roots.

The protein resides in the plastid. The protein localises to the chloroplast. The catalysed reaction is D-sedoheptulose 7-phosphate + D-glyceraldehyde 3-phosphate = aldehydo-D-ribose 5-phosphate + D-xylulose 5-phosphate. Functionally, catalyzes the transfer of a two-carbon ketol group from a ketose donor to an aldose acceptor, via a covalent intermediate with the cofactor thiamine pyrophosphate. The chain is Transketolase, chloroplastic (TKT3) from Craterostigma plantagineum (Blue gem).